The following is a 312-amino-acid chain: tRNA dimethylallyltransferase (312 aa).

An ATP-binding site is contributed by 15-22 (GPTAAGKS). 17–22 (TAAGKS) provides a ligand contact to substrate. The interaction with substrate tRNA stretch occupies residues 40-43 (DSMQ).

Belongs to the IPP transferase family. As to quaternary structure, monomer. Requires Mg(2+) as cofactor.

The enzyme catalyses adenosine(37) in tRNA + dimethylallyl diphosphate = N(6)-dimethylallyladenosine(37) in tRNA + diphosphate. Its function is as follows. Catalyzes the transfer of a dimethylallyl group onto the adenine at position 37 in tRNAs that read codons beginning with uridine, leading to the formation of N6-(dimethylallyl)adenosine (i(6)A). The chain is tRNA dimethylallyltransferase from Streptomyces avermitilis (strain ATCC 31267 / DSM 46492 / JCM 5070 / NBRC 14893 / NCIMB 12804 / NRRL 8165 / MA-4680).